A 534-amino-acid polypeptide reads, in one-letter code: Melanopsin-B (534 aa).

Topologically, residues 1 to 32 are extracellular; the sequence is MDLGKTVEYGTHRQDAIAQIDVPDQVLYTIGS. Residues 33–53 traverse the membrane as a helical segment; it reads FILIIGSVGIIGNMLVLYAFY. At 54-64 the chain is on the cytoplasmic side; it reads RNKKLRTAPNY. The chain crosses the membrane as a helical span at residues 65–85; that stretch reads FIINLAISDFLMSATQAPVCF. The Extracellular segment spans residues 86–102; it reads LSSLHREWILGDIGCNV. C100 and C178 are joined by a disulfide. A helical membrane pass occupies residues 103–123; it reads YAFCGALFGITSMMTLLAISI. Topologically, residues 124–146 are cytoplasmic; that stretch reads NRYIVITKPLQSIQWSSKKRTSQ. Residues 147 to 167 traverse the membrane as a helical segment; the sequence is IIVLVWMYSLMWSLAPLLGWS. The Extracellular portion of the chain corresponds to 168–198; sequence SYVPEGLRISCTWDYVTSTMSNRSYTMMLCC. N189 carries an N-linked (GlcNAc...) asparagine glycan. The helical transmembrane segment at 199-219 threads the bilayer; that stretch reads CVFFIPLIVISHCYLFMFLAI. Over 220-250 the chain is Cytoplasmic; sequence RSTGRNVQKLGSYGRQSFLSQSMKNEWKMAK. A helical membrane pass occupies residues 251 to 271; it reads IAFVIIIVFVLSWSPYACVTL. The Extracellular portion of the chain corresponds to 272–286; sequence IAWAGHGKSLTPYSK. The helical transmembrane segment at 287 to 307 threads the bilayer; the sequence is TVPAVIAKASAIYNPIIYGII. K294 bears the N6-(retinylidene)lysine mark. At 308–534 the chain is on the cytoplasmic side; it reads HPKYRETIHK…LYEVVERFLS (227 aa). The tract at residues 478-501 is disordered; that stretch reads SNISETKEEHDNNSEEKSKRTEEE. The span at 482-499 shows a compositional bias: basic and acidic residues; it reads ETKEEHDNNSEEKSKRTE.

It belongs to the G-protein coupled receptor 1 family. Opsin subfamily. In terms of tissue distribution, highest level in the iris, high level in the inner nuclear layer, possibly in horizontal cells, and lowest level in retinal pigment epithelium. Expressed in melanophore cells of the skin.

The protein resides in the cell membrane. Its function is as follows. Photoreceptor implicated in non-image-forming responses to light. May be able to isomerize covalently bound all-trans retinal back to 11-cis retinal. This is Melanopsin-B from Xenopus laevis (African clawed frog).